The following is a 130-amino-acid chain: Small ribosomal subunit protein uS9 (130 aa).

Belongs to the universal ribosomal protein uS9 family.

This chain is Small ribosomal subunit protein uS9, found in Photorhabdus laumondii subsp. laumondii (strain DSM 15139 / CIP 105565 / TT01) (Photorhabdus luminescens subsp. laumondii).